The following is a 1039-amino-acid chain: Multidrug resistance protein MdtB (1039 aa).

The next 12 helical transmembrane spans lie at 16–36 (FILR…AGII), 342–362 (DVQF…YVFL), 373–393 (VAVP…GFSI), 396–416 (LTLM…IVVI), 440–460 (IGFT…PLLF), 472–492 (FAVT…TLTP), 537–557 (WLTL…YLLI), 863–883 (LGGT…VLGV), 888–908 (FIHP…ALLA), 911–931 (MAGS…IGIV), 968–988 (ILMT…STGV), and 1002–1022 (GGLV…YLLF).

It belongs to the resistance-nodulation-cell division (RND) (TC 2.A.6) family. MdtB subfamily. Part of a tripartite efflux system composed of MdtA, MdtB and MdtC. MdtB forms a heteromultimer with MdtC.

It localises to the cell inner membrane. The sequence is that of Multidrug resistance protein MdtB from Serratia proteamaculans (strain 568).